The primary structure comprises 345 residues: Aspartate--ammonia ligase (345 aa).

It belongs to the class-II aminoacyl-tRNA synthetase family. AsnA subfamily.

The protein localises to the cytoplasm. It catalyses the reaction L-aspartate + NH4(+) + ATP = L-asparagine + AMP + diphosphate + H(+). Its pathway is amino-acid biosynthesis; L-asparagine biosynthesis; L-asparagine from L-aspartate (ammonia route): step 1/1. This chain is Aspartate--ammonia ligase, found in Parabacteroides distasonis (strain ATCC 8503 / DSM 20701 / CIP 104284 / JCM 5825 / NCTC 11152).